Consider the following 513-residue polypeptide: Zinc finger protein 395 (513 aa).

The segment covering 17–29 (ARVLGPSASEGPS) has biased composition (low complexity). The interval 17 to 56 (ARVLGPSASEGPSAAPPSEPLLEGAAPQPFTTSDDTPCQE) is disordered. Over residues 45–55 (PFTTSDDTPCQ) the composition is skewed to polar residues. Positions 165–174 (MDEMMAAMVL) match the Nuclear export signal motif. The tract at residues 204–269 (KESGDISDSG…DPFLLDEPAP (66 aa)) is disordered. Residues 209–229 (ISDSGSSTTSGHWSGSSGVST) are compositionally biased toward low complexity. A Phosphoserine modification is found at serine 248. A C2H2-type zinc finger spans residues 280–305 (YKCLWPNCGKVLRSIVGIKRHVKALH). A disordered region spans residues 335 to 394 (AAAAAAAGTPVPGTPTSEPAPTPSMTGLPLSALPPPLHKAQSSGPEHPGPESSLPSGALS). A compositionally biased stretch (polar residues) spans 348–359 (TPTSEPAPTPSM). Phosphoserine occurs at positions 376 and 449. The span at 376-391 (SSGPEHPGPESSLPSG) shows a compositional bias: low complexity.

Interacts with repression-mediating E2 binding site P2 of human papillomavirus type 8 (HPV8). In terms of tissue distribution, widely expressed.

Its subcellular location is the cytoplasm. It is found in the nucleus. Plays a role in papillomavirus genes transcription. The chain is Zinc finger protein 395 (ZNF395) from Homo sapiens (Human).